Consider the following 155-residue polypeptide: Small ribosomal subunit protein eS19 (155 aa).

It belongs to the eukaryotic ribosomal protein eS19 family. Component of the small ribosomal subunit.

It localises to the cytoplasm. Functionally, component of the small ribosomal subunit. The ribosome is a large ribonucleoprotein complex responsible for the synthesis of proteins in the cell. Required for proper maturation of the small (40S) ribosomal subunit. The sequence is that of Small ribosomal subunit protein eS19 (RPS19) from Entamoeba histolytica (strain ATCC 30459 / HM-1:IMSS / ABRM).